The sequence spans 496 residues: Lysine--tRNA ligase (496 aa).

2 residues coordinate Mg(2+): Glu403 and Glu410.

Belongs to the class-II aminoacyl-tRNA synthetase family. In terms of assembly, homodimer. The cofactor is Mg(2+).

The protein resides in the cytoplasm. It catalyses the reaction tRNA(Lys) + L-lysine + ATP = L-lysyl-tRNA(Lys) + AMP + diphosphate. This is Lysine--tRNA ligase from Aster yellows witches'-broom phytoplasma (strain AYWB).